A 65-amino-acid polypeptide reads, in one-letter code: Conotoxin Lp5.1 (65 aa).

A signal peptide spans 1 to 22 (MRCVPVFIILLLLIPSAPSVDA). Positions 23–50 (QRKTKDDVPLASFHDNAKRTLKRLWNKR) are excised as a propeptide.

The protein belongs to the conotoxin T superfamily. Post-translationally, contains 2 disulfide bonds that can be either 'C1-C3, C2-C4' or 'C1-C4, C2-C3', since these disulfide connectivities have been observed for conotoxins with cysteine framework V (for examples, see AC P0DQQ7 and AC P81755). As to expression, expressed by the venom duct.

It is found in the secreted. The polypeptide is Conotoxin Lp5.1 (Conus leopardus (Leopard cone)).